Reading from the N-terminus, the 439-residue chain is Glutamine synthetase (439 aa).

The GS beta-grasp domain maps to 12–93 (SKIKFVQLVF…VYGFIYKDNK (82 aa)). Residues 99–439 (PRGILKRALE…EWELERYFFL (341 aa)) form the GS catalytic domain. Glutamate 122 and glutamate 124 together coordinate Mg(2+). ATP is bound at residue glutamate 172. Mg(2+)-binding residues include glutamate 177 and glutamate 184. An L-glutamate-binding site is contributed by glycine 229. Histidine 233 contributes to the Mg(2+) binding site. ATP is bound by residues 235–237 (HIS) and serine 237. 3 residues coordinate L-glutamate: arginine 283, glutamate 289, and arginine 301. 3 residues coordinate ATP: arginine 301, arginine 306, and lysine 313. Mg(2+) is bound at residue glutamate 318. Arginine 320 contributes to the L-glutamate binding site.

Belongs to the glutamine synthetase family. In terms of assembly, oligomer of 12 subunits arranged in the form of two hexagons. Requires Mg(2+) as cofactor.

The protein localises to the cytoplasm. It carries out the reaction L-glutamate + NH4(+) + ATP = L-glutamine + ADP + phosphate + H(+). Functionally, probably involved in nitrogen metabolism via ammonium assimilation. Catalyzes the ATP-dependent biosynthesis of glutamine from glutamate and ammonia. The polypeptide is Glutamine synthetase (Pyrococcus woesei).